We begin with the raw amino-acid sequence, 797 residues long: Probable DNA polymerase (797 aa).

This sequence belongs to the DNA polymerase type-B family.

The protein localises to the mitochondrion. The catalysed reaction is DNA(n) + a 2'-deoxyribonucleoside 5'-triphosphate = DNA(n+1) + diphosphate. The sequence is that of Probable DNA polymerase from Agaricus bitorquis (Pavement mushroom).